Here is a 117-residue protein sequence, read N- to C-terminus: Large ribosomal subunit protein uL18 (117 aa).

The protein belongs to the universal ribosomal protein uL18 family. Part of the 50S ribosomal subunit; part of the 5S rRNA/L5/L18/L25 subcomplex. Contacts the 5S and 23S rRNAs.

This is one of the proteins that bind and probably mediate the attachment of the 5S RNA into the large ribosomal subunit, where it forms part of the central protuberance. This Aster yellows witches'-broom phytoplasma (strain AYWB) protein is Large ribosomal subunit protein uL18.